The following is a 310-amino-acid chain: MSTATHPRPEGPVVETAAPMPPVAVCIVTGLSGAGKSTALKVFEDMGHFVVDGLPASLAPEMVDMMSRPSMSHFKGIALGMDLRQSNFLDEINEALSDLAAVNIRPMLLFMECDAQELIRRYATTRRPHPLEREGMGLEASLLSERNSLSPLREMADLVIDTSRFSIHDLRRAIQKRWSDSKSKLRAIRVNVISFGFKYGVPREADFVFDLRFLTNPYFVADLRPMCGKDKEVAQYVFEQPHAREFCVKLIDLLLFILPLMETEGRYRVTIAVGCTGGRHRSVAMAEEVTQALRQADYPVTLEHRHLELG.

ATP is bound at residue Gly30–Ser37. Position 82–85 (Asp82–Gln85) interacts with GTP.

It belongs to the RapZ-like family.

Its function is as follows. Displays ATPase and GTPase activities. This chain is Nucleotide-binding protein Ddes_0972, found in Desulfovibrio desulfuricans (strain ATCC 27774 / DSM 6949 / MB).